A 119-amino-acid polypeptide reads, in one-letter code: Large ribosomal subunit protein bL20 (119 aa).

It belongs to the bacterial ribosomal protein bL20 family.

Its function is as follows. Binds directly to 23S ribosomal RNA and is necessary for the in vitro assembly process of the 50S ribosomal subunit. It is not involved in the protein synthesizing functions of that subunit. The sequence is that of Large ribosomal subunit protein bL20 from Methylocella silvestris (strain DSM 15510 / CIP 108128 / LMG 27833 / NCIMB 13906 / BL2).